A 474-amino-acid chain; its full sequence is Bifunctional protein HldE (474 aa).

A ribokinase region spans residues 1–318 (MKLSMPRFDQ…RAIQREEGSE (318 aa)). ATP is bound at residue 194–197 (NLSE). D263 is a catalytic residue. The interval 343-474 (FTNGCFDILH…AIVEKIRGQG (132 aa)) is cytidylyltransferase.

It in the N-terminal section; belongs to the carbohydrate kinase PfkB family. This sequence in the C-terminal section; belongs to the cytidylyltransferase family. In terms of assembly, homodimer.

The enzyme catalyses D-glycero-beta-D-manno-heptose 7-phosphate + ATP = D-glycero-beta-D-manno-heptose 1,7-bisphosphate + ADP + H(+). It carries out the reaction D-glycero-beta-D-manno-heptose 1-phosphate + ATP + H(+) = ADP-D-glycero-beta-D-manno-heptose + diphosphate. Its pathway is nucleotide-sugar biosynthesis; ADP-L-glycero-beta-D-manno-heptose biosynthesis; ADP-L-glycero-beta-D-manno-heptose from D-glycero-beta-D-manno-heptose 7-phosphate: step 1/4. It functions in the pathway nucleotide-sugar biosynthesis; ADP-L-glycero-beta-D-manno-heptose biosynthesis; ADP-L-glycero-beta-D-manno-heptose from D-glycero-beta-D-manno-heptose 7-phosphate: step 3/4. In terms of biological role, catalyzes the phosphorylation of D-glycero-D-manno-heptose 7-phosphate at the C-1 position to selectively form D-glycero-beta-D-manno-heptose-1,7-bisphosphate. Functionally, catalyzes the ADP transfer from ATP to D-glycero-beta-D-manno-heptose 1-phosphate, yielding ADP-D-glycero-beta-D-manno-heptose. This is Bifunctional protein HldE from Pseudomonas syringae pv. tomato (strain ATCC BAA-871 / DC3000).